The sequence spans 279 residues: MKSAAAFATFLTLSVFVATTEVQGTPGLRGLRSLADNQSTESSEGRKDHYNHHRHVKKVIKKVKKIAIPVPVAVPQYIPVPISGPSSVIASQNTAVVGSSNNVVAASGAGAVGSGVLGPGGVTPAPTTMTGRPVATPAPTTSVPSSLVNTDTSDNQLPTTPVAASQGGGIGSNLAGGSGNSVSMSGFGGGNQMGTFGNSMFGGRGANTGNGFNGNGNNSFGQQMGIDTPNGNMFGGFGRQGAAGGGGQRGFGGEAPDGINSVASGNALGGGITRRRRRL.

The first 19 residues, 1 to 19 (MKSAAAFATFLTLSVFVAT), serve as a signal peptide directing secretion. The short motif at 29-46 (RGLRSLADNQSTESSEGR) is the RxLR-dEER element. Disordered regions lie at residues 29-53 (RGLRSLADNQSTESSEGRKDHYNHH) and 135-176 (ATPA…NLAG). A glycan (N-linked (GlcNAc...) asparagine) is linked at asparagine 37. Residues 135-146 (ATPAPTTSVPSS) show a composition bias toward low complexity. Over residues 147-163 (LVNTDTSDNQLPTTPVA) the composition is skewed to polar residues. Gly residues predominate over residues 166–176 (QGGGIGSNLAG). Asparagine 217 is a glycosylation site (N-linked (GlcNAc...) asparagine).

This sequence belongs to the RxLR effector family.

Its subcellular location is the secreted. It is found in the host cell membrane. Functionally, secreted effector that completely suppresses the host cell death induced by cell death-inducing proteins. The protein is Secreted RxLR effector protein 90 of Plasmopara viticola (Downy mildew of grapevine).